A 273-amino-acid chain; its full sequence is 2,3,4,5-tetrahydropyridine-2,6-dicarboxylate N-succinyltransferase (273 aa).

Substrate-binding residues include arginine 104 and aspartate 141.

This sequence belongs to the transferase hexapeptide repeat family. As to quaternary structure, homotrimer.

Its subcellular location is the cytoplasm. It carries out the reaction (S)-2,3,4,5-tetrahydrodipicolinate + succinyl-CoA + H2O = (S)-2-succinylamino-6-oxoheptanedioate + CoA. It functions in the pathway amino-acid biosynthesis; L-lysine biosynthesis via DAP pathway; LL-2,6-diaminopimelate from (S)-tetrahydrodipicolinate (succinylase route): step 1/3. The chain is 2,3,4,5-tetrahydropyridine-2,6-dicarboxylate N-succinyltransferase from Psychrobacter cryohalolentis (strain ATCC BAA-1226 / DSM 17306 / VKM B-2378 / K5).